The following is a 185-amino-acid chain: Ribosome-recycling factor (185 aa).

Belongs to the RRF family.

Its subcellular location is the cytoplasm. In terms of biological role, responsible for the release of ribosomes from messenger RNA at the termination of protein biosynthesis. May increase the efficiency of translation by recycling ribosomes from one round of translation to another. In Salmonella paratyphi A (strain ATCC 9150 / SARB42), this protein is Ribosome-recycling factor.